We begin with the raw amino-acid sequence, 508 residues long: Endo-4-O-sulfatase (508 aa).

Residue Ser84 is modified to 3-oxoalanine (Ser).

This sequence belongs to the sulfatase family. In terms of processing, the conversion to 3-oxoalanine (also known as C-formylglycine, FGly), of a serine or cysteine residue in prokaryotes and of a cysteine residue in eukaryotes, is critical for catalytic activity.

In terms of biological role, endosulfatase involved in the degradation of the glycosaminoglycans (GAGs) chondroitin sulfate (CS) and dermatan sulfate (DS). Efficiently hydrolyzes sulfate groups from a broad range of substrate size, including disaccharide to high molecular weight CS and DS polymers. Has a strict specificity for the 4-O-sulfate groups of galactosamine. GAG-specific sulfatases play a key role in the persistence of the major human gut symbiont B.thetaiotaomicron in the host gastrointestinal tract. The sequence is that of Endo-4-O-sulfatase from Bacteroides thetaiotaomicron (strain ATCC 29148 / DSM 2079 / JCM 5827 / CCUG 10774 / NCTC 10582 / VPI-5482 / E50).